A 198-amino-acid polypeptide reads, in one-letter code: Integrator complex subunit 8-like protein (198 aa).

This sequence belongs to the Integrator subunit 8 family. As to quaternary structure, component of the Integrator complex. The core complex associates with protein phosphatase 2A subunits, to form the Integrator-PP2A (INTAC) complex.

It localises to the nucleus. The protein resides in the chromosome. Its function is as follows. Component of the integrator complex, a multiprotein complex that terminates RNA polymerase II (Pol II) transcription in the promoter-proximal region of genes. The integrator complex provides a quality checkpoint during transcription elongation by driving premature transcription termination of transcripts that are unfavorably configured for transcriptional elongation: the complex terminates transcription by (1) catalyzing dephosphorylation of the C-terminal domain (CTD) of Pol II subunit polr2a, (2) degrading the exiting nascent RNA transcript via endonuclease activity and (3) promoting the release of Pol II from bound DNA. The integrator complex is also involved in terminating the synthesis of non-coding Pol II transcripts, such as enhancer RNAs (eRNAs), small nuclear RNAs (snRNAs), telomerase RNAs and long non-coding RNAs (lncRNAs). Within the integrator complex, INTS8 is required for the recruitment of protein phosphatase 2A (PP2A) to transcription pause-release checkpoint. The polypeptide is Integrator complex subunit 8-like protein (Dictyostelium discoideum (Social amoeba)).